The chain runs to 597 residues: Nuclear factor erythroid 2-related factor 2 (597 aa).

Residues 29-31 (DLG) carry the DLG motif motif. A Phosphoserine; by PKC modification is found at Ser40. The ETGE motif motif lies at 79–82 (ETGE). Ser207 carries the phosphoserine modification. The tract at residues 327–440 (TMEFNDSDSG…APFTKDKHSS (114 aa)) is disordered. The span at 333-345 (SDSGISLNTSPSR) shows a compositional bias: polar residues. N-linked (Glc) (glycation) lysine glycosylation is found at Lys454, Lys464, and Lys479. Residues 489-552 (LIRDIRRRGK…HLLKRRLSTL (64 aa)) enclose the bZIP domain. N-linked (Glc) (glycation) arginine glycosylation occurs at Arg491. Residues 491–510 (RDIRRRGKNKVAAQNCRKRK) form a basic motif region. The leucine-zipper stretch occupies residues 514-521 (IVELEQDL). N-linked (Glc) (glycation) arginine glycosylation is present at Arg561. A disordered region spans residues 563–597 (EDGKPYSPSEYSLQQTRDGNVFLVPKSKKPDTKKN). Lys566 is a glycosylation site (N-linked (Glc) (glycation) lysine). Residues 571 to 580 (SEYSLQQTRD) are compositionally biased toward polar residues. Residues 583–588 (VFLVPK) form a mediates interaction with CHD6 and is necessary to activate transcription region. Lys588 and Lys591 each carry N6-acetyllysine; by CREBBP.

Belongs to the bZIP family. CNC subfamily. In terms of assembly, heterodimer; heterodimerizes with small Maf proteins. Interacts (via the bZIP domain) with MAFG and MAFK; required for binding to antioxidant response elements (AREs) on DNA. Interacts with KEAP1; the interaction is direct and promotes ubiquitination by the BCR(KEAP1) E3 ubiquitin ligase complex. Forms a ternary complex with PGAM5 and KEAP1. Interacts with EEF1D at heat shock promoter elements (HSE). Interacts via its leucine-zipper domain with the coiled-coil domain of PMF1. Interacts with CHD6; involved in activation of the transcription. Interacts with ESRRB; represses NFE2L2 transcriptional activity. Interacts with MOTS-c, a peptide produced by the mitochondrially encoded 12S rRNA MT-RNR1; the interaction occurs in the nucleus following metabolic stress. Ubiquitinated in the cytoplasm by the BCR(KEAP1) E3 ubiquitin ligase complex leading to its degradation. In response to oxidative stress, electrophile metabolites, such as sulforaphane, modify KEAP1, leading to inhibit activity of the BCR(KEAP1) complex, promoting NFE2L2/NRF2 nuclear accumulation and activity. In response to autophagy, the BCR(KEAP1) complex is inactivated. In terms of processing, phosphorylated by EIF2AK3/PERK following unfolded protein response (UPR), promoting dissociation from its cytoplasmic inhibitor KEAP1, followed by its translocation into the nucleus. Phosphorylation of Ser-40 by PKC in response to oxidative stress dissociates NFE2L2 from its cytoplasmic inhibitor KEAP1, promoting its translocation into the nucleus. Post-translationally, acetylation at Lys-588 and Lys-591 increases nuclear localization whereas deacetylation by SIRT1 enhances cytoplasmic presence. Glycation impairs transcription factor activity by preventing heterodimerization with small Maf proteins. Deglycation by FN3K restores activity. In terms of tissue distribution, widely expressed. Highest expression in liver, skeletal muscle, luminal cells of the stomach and intestine, lining of the bronchi and alveoli, and in renal tubules; followed by heart, spleen, testis and brain.

It localises to the cytoplasm. Its subcellular location is the cytosol. The protein localises to the nucleus. Its function is as follows. Transcription factor that plays a key role in the response to oxidative stress: binds to antioxidant response (ARE) elements present in the promoter region of many cytoprotective genes, such as phase 2 detoxifying enzymes, and promotes their expression, thereby neutralizing reactive electrophiles. In normal conditions, ubiquitinated and degraded in the cytoplasm by the BCR(KEAP1) complex. In response to oxidative stress, electrophile metabolites inhibit activity of the BCR(KEAP1) complex, promoting nuclear accumulation of NFE2L2/NRF2, heterodimerization with one of the small Maf proteins and binding to ARE elements of cytoprotective target genes. The NFE2L2/NRF2 pathway is also activated in response to selective autophagy: autophagy promotes interaction between KEAP1 and SQSTM1/p62 and subsequent inactivation of the BCR(KEAP1) complex, leading to NFE2L2/NRF2 nuclear accumulation and expression of cytoprotective genes. The NFE2L2/NRF2 pathway is also activated during the unfolded protein response (UPR), contributing to redox homeostasis and cell survival following endoplasmic reticulum stress. May also be involved in the transcriptional activation of genes of the beta-globin cluster by mediating enhancer activity of hypersensitive site 2 of the beta-globin locus control region. Also plays an important role in the regulation of the innate immune response. It is a critical regulator of the innate immune response and survival during sepsis by maintaining redox homeostasis and restraint of the dysregulation of pro-inflammatory signaling pathways like MyD88-dependent and -independent and TNF-alpha signaling. Suppresses macrophage inflammatory response by blocking pro-inflammatory cytokine transcription and the induction of IL6. Binds to the proximity of pro-inflammatory genes in macrophages and inhibits RNA Pol II recruitment. The inhibition is independent of the Nrf2-binding motif and reactive oxygen species level. Represses antiviral cytosolic DNA sensing by suppressing the expression of the adapter protein STING1 and decreasing responsiveness to STING1 agonists while increasing susceptibility to infection with DNA viruses. In Mus musculus (Mouse), this protein is Nuclear factor erythroid 2-related factor 2.